The chain runs to 338 residues: Ketol-acid reductoisomerase (NADP(+)) (338 aa).

Residues 1–181 (MKVFYDKDCD…GGGRAGIIET (181 aa)) enclose the KARI N-terminal Rossmann domain. Residues 24 to 27 (YGSQ), R47, and S52 each bind NADP(+). H107 is an active-site residue. G133 provides a ligand contact to NADP(+). In terms of domain architecture, KARI C-terminal knotted spans 182 to 327 (NFREETETDL…AKLRAMMPWI (146 aa)). D190, E194, E226, and E230 together coordinate Mg(2+). S251 is a substrate binding site.

Belongs to the ketol-acid reductoisomerase family. Requires Mg(2+) as cofactor.

The catalysed reaction is (2R)-2,3-dihydroxy-3-methylbutanoate + NADP(+) = (2S)-2-acetolactate + NADPH + H(+). The enzyme catalyses (2R,3R)-2,3-dihydroxy-3-methylpentanoate + NADP(+) = (S)-2-ethyl-2-hydroxy-3-oxobutanoate + NADPH + H(+). It participates in amino-acid biosynthesis; L-isoleucine biosynthesis; L-isoleucine from 2-oxobutanoate: step 2/4. Its pathway is amino-acid biosynthesis; L-valine biosynthesis; L-valine from pyruvate: step 2/4. Functionally, involved in the biosynthesis of branched-chain amino acids (BCAA). Catalyzes an alkyl-migration followed by a ketol-acid reduction of (S)-2-acetolactate (S2AL) to yield (R)-2,3-dihydroxy-isovalerate. In the isomerase reaction, S2AL is rearranged via a Mg-dependent methyl migration to produce 3-hydroxy-3-methyl-2-ketobutyrate (HMKB). In the reductase reaction, this 2-ketoacid undergoes a metal-dependent reduction by NADPH to yield (R)-2,3-dihydroxy-isovalerate. In Herminiimonas arsenicoxydans, this protein is Ketol-acid reductoisomerase (NADP(+)).